A 255-amino-acid chain; its full sequence is Octanoyltransferase (255 aa).

The BPL/LPL catalytic domain maps to 54-238; that stretch reads GDAAELVWLL…AFTEIFGATV (185 aa). Substrate contacts are provided by residues 92–99, 167–169, and 180–182; these read RGGQLTYH, AIG, and GIA. The Acyl-thioester intermediate role is filled by cysteine 198.

Belongs to the LipB family.

The protein resides in the cytoplasm. It carries out the reaction octanoyl-[ACP] + L-lysyl-[protein] = N(6)-octanoyl-L-lysyl-[protein] + holo-[ACP] + H(+). Its pathway is protein modification; protein lipoylation via endogenous pathway; protein N(6)-(lipoyl)lysine from octanoyl-[acyl-carrier-protein]: step 1/2. In terms of biological role, catalyzes the transfer of endogenously produced octanoic acid from octanoyl-acyl-carrier-protein onto the lipoyl domains of lipoate-dependent enzymes. Lipoyl-ACP can also act as a substrate although octanoyl-ACP is likely to be the physiological substrate. The sequence is that of Octanoyltransferase from Rhodopseudomonas palustris (strain HaA2).